The primary structure comprises 212 residues: Noggin-2 (212 aa).

The signal sequence occupies residues 1–23 (MGSITRALPLLLLLLLCAHGTAS). Positions 37 to 56 (LPVPDLIENPDPEHDPREQD) are disordered. Positions 47–56 (DPEHDPREQD) are enriched in basic and acidic residues. N84 is a glycosylation site (N-linked (GlcNAc...) asparagine).

Belongs to the noggin family. In terms of assembly, homodimer; disulfide-linked.

The protein localises to the secreted. In terms of biological role, inhibitor of bone morphogenetic proteins (BMP) signaling. The polypeptide is Noggin-2 (nog2) (Danio rerio (Zebrafish)).